Reading from the N-terminus, the 469-residue chain is ATP-dependent protease ATPase subunit HslU (469 aa).

ATP-binding positions include Ile-21, Gly-63–Glu-68, Asp-282, Glu-347, and Arg-419.

This sequence belongs to the ClpX chaperone family. HslU subfamily. In terms of assembly, a double ring-shaped homohexamer of HslV is capped on each side by a ring-shaped HslU homohexamer. The assembly of the HslU/HslV complex is dependent on binding of ATP.

It is found in the cytoplasm. ATPase subunit of a proteasome-like degradation complex; this subunit has chaperone activity. The binding of ATP and its subsequent hydrolysis by HslU are essential for unfolding of protein substrates subsequently hydrolyzed by HslV. HslU recognizes the N-terminal part of its protein substrates and unfolds these before they are guided to HslV for hydrolysis. The polypeptide is ATP-dependent protease ATPase subunit HslU (Petrotoga mobilis (strain DSM 10674 / SJ95)).